Reading from the N-terminus, the 198-residue chain is Pyridoxine/pyridoxamine 5'-phosphate oxidase (198 aa).

FMN contacts are provided by residues 47–52 (RMVLVK), 62–63 (FT), R68, K69, and Q91. K52 provides a ligand contact to substrate. The substrate site is built by Y109, R113, and S117. Residues 126-127 (QS) and W171 each bind FMN. 177–179 (RLH) serves as a coordination point for substrate. R181 is a binding site for FMN.

The protein belongs to the pyridoxamine 5'-phosphate oxidase family. In terms of assembly, homodimer. Requires FMN as cofactor.

It catalyses the reaction pyridoxamine 5'-phosphate + O2 + H2O = pyridoxal 5'-phosphate + H2O2 + NH4(+). The enzyme catalyses pyridoxine 5'-phosphate + O2 = pyridoxal 5'-phosphate + H2O2. Its pathway is cofactor metabolism; pyridoxal 5'-phosphate salvage; pyridoxal 5'-phosphate from pyridoxamine 5'-phosphate: step 1/1. It functions in the pathway cofactor metabolism; pyridoxal 5'-phosphate salvage; pyridoxal 5'-phosphate from pyridoxine 5'-phosphate: step 1/1. Functionally, catalyzes the oxidation of either pyridoxine 5'-phosphate (PNP) or pyridoxamine 5'-phosphate (PMP) into pyridoxal 5'-phosphate (PLP). This is Pyridoxine/pyridoxamine 5'-phosphate oxidase from Anaeromyxobacter dehalogenans (strain 2CP-C).